The chain runs to 121 residues: MRYLAAYLLAQLGGTGRPQESDIKNILSSVGVECEQERAKLGVDQLHGKNVRDLINTGKEKMSAVSFGATPVAVPSGGAPAAATAAAEAPKGGDKAAAPPKEEKKEESEESDADMGFSPFD.

Residues 72–99 show a composition bias toward low complexity; the sequence is VAVPSGGAPAAATAAAEAPKGGDKAAAP. Residues 72–121 form a disordered region; that stretch reads VAVPSGGAPAAATAAAEAPKGGDKAAAPPKEEKKEESEESDADMGFSPFD.

Belongs to the eukaryotic ribosomal protein P1/P2 family. In terms of assembly, P1 and P2 exist as dimers at the large ribosomal subunit. Phosphorylated.

Plays an important role in the elongation step of protein synthesis. The chain is Large ribosomal subunit protein P2 from Taenia solium (Pork tapeworm).